The sequence spans 365 residues: Class I histocompatibility antigen, B alpha chain (365 aa).

The N-terminal stretch at 1-24 (MTVMAPRTLLLLLSGALVLTETWA) is a signal peptide. The interval 25–114 (GSHSMRYFST…ALGYYNQSEA (90 aa)) is alpha-1. The Extracellular segment spans residues 25–308 (GSHSMRYFST…EPPSQPTIPI (284 aa)). The N-linked (GlcNAc...) asparagine glycan is linked to asparagine 110. Residues 115–206 (GSHTIQMMSG…ENGKETLQRA (92 aa)) are alpha-2. Disulfide bonds link cysteine 125-cysteine 188 and cysteine 227-cysteine 283. The tract at residues 207 to 298 (EPPKTHVTHH…GLPEPLTLRW (92 aa)) is alpha-3. The 89-residue stretch at 209-297 (PKTHVTHHPV…EGLPEPLTLR (89 aa)) folds into the Ig-like C1-type domain. The tract at residues 299–308 (EPPSQPTIPI) is connecting peptide. The helical transmembrane segment at 309–332 (MGIVAILAILGAVVTGAVVTAVMW) threads the bilayer. The Cytoplasmic portion of the chain corresponds to 333–365 (RKKSSDKKGGSYSQAARSDSAQGSDVSLTACKV). Residues 337-361 (SDKKGGSYSQAARSDSAQGSDVSLT) are disordered. Over residues 346–359 (QAARSDSAQGSDVS) the composition is skewed to polar residues. Phosphoserine occurs at positions 356 and 359.

This sequence belongs to the MHC class I family. As to quaternary structure, heterodimer of an alpha chain and a beta chain (beta-2-microglobulin).

The protein resides in the membrane. Its function is as follows. Involved in the presentation of foreign antigens to the immune system. The protein is Class I histocompatibility antigen, B alpha chain of Saguinus oedipus (Cotton-top tamarin).